We begin with the raw amino-acid sequence, 977 residues long: MGSKQVSKTRNGGFSKLKTVESSASSTTSSSKLYQEASVDSHSSPTSSSVRSKPQLPPKPLQSKENVTVTVRFRPLSPREIRKGEEIAWYADGETIVRNENNQSIAYAYDRVFGPTTTTRNVYDVAAQHVVNGAMAGVNGTIFAYGVTSSGKTHTMHGNQRSPGIIPLAVKDAFSIIQETPRREFLLRVSYFEIYNEVVNDLLNPAGQNLRIREDEQGTYIEGIKEEVVLSPAHVLSLIAAGEEHRHIGSTSFNLLSSRSHTMFTLTIESSPLGDNNEGGAVHLSQLNLIDLAGSESSKAETSGLRRKEGSYINKSLLTLGTVISKLTDRRASHVPYRDSKLTRLLESSLSGHGRVSLICTVTPASSNSEETHNTLKFAHRAKHIEIQAAQNKIIDEKSLIKKYQYEIRQLKEELEQLKQGIKPVSQLKDISGDDIDIVLLKQKLEEEEDAKAALLSRIQRLTKLILVSNKTPQTSRFSYRADPRRRHSFGEEELAYLPHKRRDLTDDENLELYVSREGTPEIIDDAFIEEKKTRKHGLLNWLKIKKKDSSLGGSSLSDKSSAVKSNSTPSTPQGEGSDFHTESRLSEGSALADQIIETMENREAHEDSFHEIETPETRIKMIDQMEILREQQKTLSEEMAQQSRSFKLLSEEAAKAPQNEEIKAEIINLNGDIKAKNDQIATLGKQILDFVIASHDELDKSDIVQAVSEMRAQLNEKCFELEVKAADNRIIQEQLTEKTSFCEDLQEEVANLKQQLSDALELGDINSVTCHMQQSSQSPNKNEEKVIEAQAFEIEELKLKAAELSELNEQLEIRNKKLAEESSYAKELASAAAIELKALSEEIARLMNHNERLAADLAAVQKSSVTTPQGKTGNLRNGRRESVSKRKEQENSLMELKRELTVSKEREVSFEAALIEKIQREAELQRTVEESKQREAYLENELANMWGLVAKLRSQGAANSGLSDSVSETRIEHFGT.

Residues 1–12 (MGSKQVSKTRNG) show a composition bias toward polar residues. The segment at 1–66 (MGSKQVSKTR…PPKPLQSKEN (66 aa)) is disordered. Low complexity-rich tracts occupy residues 22 to 31 (SSASSTTSSS) and 38 to 54 (SVDS…RSKP). A Kinesin motor domain is found at 66 to 385 (NVTVTVRFRP…LKFAHRAKHI (320 aa)). 146 to 153 (GVTSSGKT) lines the ATP pocket. Residues 386-471 (EIQAAQNKII…LTKLILVSNK (86 aa)) are a coiled coil. The tract at residues 549–589 (DSSLGGSSLSDKSSAVKSNSTPSTPQGEGSDFHTESRLSEG) is disordered. Residues 551-561 (SLGGSSLSDKS) show a composition bias toward low complexity. The span at 563 to 575 (AVKSNSTPSTPQG) shows a compositional bias: polar residues. 2 coiled-coil regions span residues 626–688 (MEIL…GKQI) and 732–942 (IQEQ…LENE). Polar residues predominate over residues 864-876 (SSVTTPQGKTGNL). Disordered regions lie at residues 864–891 (SSVT…KEQE) and 958–977 (AANS…HFGT). Residues 879–891 (GRRESVSKRKEQE) are compositionally biased toward basic and acidic residues. Polar residues predominate over residues 958-967 (AANSGLSDSV). Residues 968–977 (SETRIEHFGT) are compositionally biased toward basic and acidic residues.

This sequence belongs to the TRAFAC class myosin-kinesin ATPase superfamily. Kinesin family. KIN-7 subfamily.

Its subcellular location is the plastid. The protein localises to the chloroplast. The polypeptide is Kinesin-like protein KIN-7L, chloroplastic (Arabidopsis thaliana (Mouse-ear cress)).